The chain runs to 866 residues: Retinoblastoma-related protein 2 (866 aa).

A domain A region spans residues 274–475 (TPITSAMTTA…EKGSSLYNSL (202 aa)). The tract at residues 274 to 721 (TPITSAMTTA…NEVFVPAAKP (448 aa)) is pocket. Positions 476–593 (IVARPSVASE…PVGGNEKCAD (118 aa)) are spacer. The interval 513-551 (LPATPSKKRAAGRDDNADPRSPKRPCNESRSPVVEHNLQ) is disordered. Residues 523–539 (AGRDDNADPRSPKRPCN) are compositionally biased toward basic and acidic residues. The domain B stretch occupies residues 594 to 721 (VTIQIFFSKI…NEVFVPAAKP (128 aa)). 2 disordered regions span residues 731–754 (TRPEDKKNASGQVPGSPKLSPFPN) and 839–866 (SLGQPNGGSTSLDPAAAFSPLSKRKPDT). Residues 841–850 (GQPNGGSTSL) are compositionally biased toward polar residues.

Belongs to the retinoblastoma protein (RB) family. Ubiquitous.

It localises to the nucleus. In terms of biological role, regulator of biological processes that recruits a histone deacetylase to control gene transcription. May play a role in the entry into mitosis, negatively regulating the cell proliferation. Formation of stable complexes with geminiviridae replication-associated proteins may create a cellular environment which favors viral DNA replication. In Zea mays (Maize), this protein is Retinoblastoma-related protein 2 (RBR2).